Consider the following 333-residue polypeptide: Ketol-acid reductoisomerase (NADP(+)) (333 aa).

Positions T6–T186 constitute a KARI N-terminal Rossmann domain. Residues Y29–Q32, K52, S55, S57, and D87–Q90 each bind NADP(+). H112 is an active-site residue. G138 is an NADP(+) binding site. One can recognise a KARI C-terminal knotted domain in the interval T187–S332. Residues D195, E199, E231, and E235 each contribute to the Mg(2+) site. S256 contributes to the substrate binding site.

This sequence belongs to the ketol-acid reductoisomerase family. Requires Mg(2+) as cofactor.

The catalysed reaction is (2R)-2,3-dihydroxy-3-methylbutanoate + NADP(+) = (2S)-2-acetolactate + NADPH + H(+). The enzyme catalyses (2R,3R)-2,3-dihydroxy-3-methylpentanoate + NADP(+) = (S)-2-ethyl-2-hydroxy-3-oxobutanoate + NADPH + H(+). The protein operates within amino-acid biosynthesis; L-isoleucine biosynthesis; L-isoleucine from 2-oxobutanoate: step 2/4. It participates in amino-acid biosynthesis; L-valine biosynthesis; L-valine from pyruvate: step 2/4. In terms of biological role, involved in the biosynthesis of branched-chain amino acids (BCAA). Catalyzes an alkyl-migration followed by a ketol-acid reduction of (S)-2-acetolactate (S2AL) to yield (R)-2,3-dihydroxy-isovalerate. In the isomerase reaction, S2AL is rearranged via a Mg-dependent methyl migration to produce 3-hydroxy-3-methyl-2-ketobutyrate (HMKB). In the reductase reaction, this 2-ketoacid undergoes a metal-dependent reduction by NADPH to yield (R)-2,3-dihydroxy-isovalerate. The sequence is that of Ketol-acid reductoisomerase (NADP(+)) from Tropheryma whipplei (strain Twist) (Whipple's bacillus).